Consider the following 334-residue polypeptide: Glycerol-3-phosphate dehydrogenase [NAD(P)+] (334 aa).

NADPH-binding residues include tryptophan 13, arginine 33, and lysine 106. Sn-glycerol 3-phosphate-binding residues include lysine 106, glycine 137, and serine 139. Position 141 (alanine 141) interacts with NADPH. Residues lysine 192, aspartate 245, serine 255, arginine 256, and asparagine 257 each coordinate sn-glycerol 3-phosphate. Catalysis depends on lysine 192, which acts as the Proton acceptor. An NADPH-binding site is contributed by arginine 256. NADPH contacts are provided by valine 280 and glutamate 282.

The protein belongs to the NAD-dependent glycerol-3-phosphate dehydrogenase family.

It localises to the cytoplasm. It carries out the reaction sn-glycerol 3-phosphate + NAD(+) = dihydroxyacetone phosphate + NADH + H(+). The catalysed reaction is sn-glycerol 3-phosphate + NADP(+) = dihydroxyacetone phosphate + NADPH + H(+). It participates in membrane lipid metabolism; glycerophospholipid metabolism. Functionally, catalyzes the reduction of the glycolytic intermediate dihydroxyacetone phosphate (DHAP) to sn-glycerol 3-phosphate (G3P), the key precursor for phospholipid synthesis. The sequence is that of Glycerol-3-phosphate dehydrogenase [NAD(P)+] from Chlamydia muridarum (strain MoPn / Nigg).